Here is a 342-residue protein sequence, read N- to C-terminus: Farnesyl pyrophosphate synthase (342 aa).

Residues Lys47, Arg50, and Gln86 each contribute to the isopentenyl diphosphate site. Positions 93 and 97 each coordinate Mg(2+). Arg102 contacts dimethylallyl diphosphate. Arg103 is an isopentenyl diphosphate binding site. Lys190, Thr191, Gln229, Lys246, and Lys255 together coordinate dimethylallyl diphosphate.

It belongs to the FPP/GGPP synthase family. Homodimer. It depends on Mg(2+) as a cofactor. As to expression, mostly expressed in roots and seeds, and to a lower extent, in leaves and stems.

Its subcellular location is the cytoplasm. It catalyses the reaction isopentenyl diphosphate + dimethylallyl diphosphate = (2E)-geranyl diphosphate + diphosphate. The enzyme catalyses isopentenyl diphosphate + (2E)-geranyl diphosphate = (2E,6E)-farnesyl diphosphate + diphosphate. It functions in the pathway isoprenoid biosynthesis; farnesyl diphosphate biosynthesis; farnesyl diphosphate from geranyl diphosphate and isopentenyl diphosphate: step 1/1. Its pathway is isoprenoid biosynthesis; geranyl diphosphate biosynthesis; geranyl diphosphate from dimethylallyl diphosphate and isopentenyl diphosphate: step 1/1. Stimulated by methyl jasmonate (MeJA). Its function is as follows. Catalyzes the sequential condensation of isopentenyl pyrophosphate with the allylic pyrophosphates, dimethylallyl pyrophosphate, and then with the resultant geranylpyrophosphate to the ultimate product farnesyl pyrophosphate. Component of the triterpene saponins (e.g. ginsenosides or panaxosides) and phytosterols biosynthetic pathways. Promotes the accumulation of ginsenosides. This is Farnesyl pyrophosphate synthase from Panax ginseng (Korean ginseng).